The sequence spans 224 residues: MRLLLAEDNRELAHWLEKALVQNGFAVDCVFDGLAADHLLHSEMYALAVLDINMPGMDGLEVVQRLRKRGQTLPVLLLTARSAVADRVKGLNVGADDYLPKPFELEELDARLRALLRRSAGQVHEVQQLGELIFHDEGYFLLQGQPLALTPREQALLTVLMYRRTRPVSRQQLFEQVFSLNDEVSPESIELYIHRLRKKLQGSDVRITTLRGLGYVLERGDEVG.

One can recognise a Response regulatory domain in the interval 2 to 116 (RLLLAEDNRE…ELDARLRALL (115 aa)). Position 51 is a 4-aspartylphosphate (Asp-51). Residues 121 to 219 (GQVHEVQQLG…LRGLGYVLER (99 aa)) constitute a DNA-binding region (ompR/PhoB-type).

Its function is as follows. Transcriptional activator of the tctI tricarboxylate transport system operon. This is Transcriptional regulatory protein TctD (tctD) from Salmonella typhimurium (strain SL1344).